A 628-amino-acid polypeptide reads, in one-letter code: Biosynthetic arginine decarboxylase (628 aa).

The residue at position 99 (K99) is an N6-(pyridoxal phosphate)lysine. 279-289 (VDVGGGLGIDY) contacts substrate.

This sequence belongs to the Orn/Lys/Arg decarboxylase class-II family. SpeA subfamily. Mg(2+) is required as a cofactor. Requires pyridoxal 5'-phosphate as cofactor.

The enzyme catalyses L-arginine + H(+) = agmatine + CO2. It functions in the pathway amine and polyamine biosynthesis; agmatine biosynthesis; agmatine from L-arginine: step 1/1. In terms of biological role, catalyzes the biosynthesis of agmatine from arginine. The chain is Biosynthetic arginine decarboxylase from Xylella fastidiosa (strain M23).